The chain runs to 918 residues: Calcium-transporting ATPase type 2C member 1 (918 aa).

Residues 1–78 are Cytoplasmic-facing; sequence MKVARFQKIP…EPLWKKYISQ (78 aa). Residues 79-95 traverse the membrane as a helical segment; sequence FKNPLIMLLLASAVISI. Residues 96–99 lie on the Extracellular side of the membrane; it reads LMRQ. A helical membrane pass occupies residues 100–121; the sequence is FDDAVSITVAIVIVVTVAFVQE. At 122–262 the chain is on the cytoplasmic side; that stretch reads YRSEKSLEEL…PKTPLQKSMD (141 aa). A helical transmembrane segment spans residues 263 to 282; it reads LLGKQLSFYSFGIIGIIMLV. The Extracellular segment spans residues 283 to 294; the sequence is GWLLGKDILEMF. A helical transmembrane segment spans residues 295-316; it reads TISVSLAVAAIPEGLPIVVTVT. The Cytoplasmic portion of the chain corresponds to 317 to 699; that stretch reads LALGVMRMVK…EGKGIYNNIK (383 aa). Aspartate 349 (4-aspartylphosphate intermediate) is an active-site residue. Aspartate 643 and aspartate 647 together coordinate Mg(2+). A helical membrane pass occupies residues 700–722; sequence NFVRFQLSTSIAALTLISLATLM. Topologically, residues 723–727 are extracellular; sequence NFPNP. The helical transmembrane segment at 728–751 threads the bilayer; sequence LNAMQILWINIIMDGPPAQSLGVE. Topologically, residues 752–775 are cytoplasmic; sequence PVDKDVIRKPPRNWKDSILTKNLI. A helical membrane pass occupies residues 776–794; sequence LKILVSSIIIVCGTLFVFW. Over 795-801 the chain is Extracellular; the sequence is RELRDNV. Residues 802-827 form a helical membrane-spanning segment; the sequence is ITPRDTTMTFTCFVFFDMFNALSSRS. Topologically, residues 828–842 are cytoplasmic; sequence QTKSVFEIGLCSNKM. A helical membrane pass occupies residues 843 to 862; the sequence is FCYAVLGSIMGQLLVIYFPP. The Extracellular portion of the chain corresponds to 863–875; that stretch reads LQKVFQTESLSIL. The helical transmembrane segment at 876–892 threads the bilayer; sequence DLLFLLGLTSSVCIVSE. Residues 893 to 918 are Cytoplasmic-facing; sequence IIKKVERSREKVQKNAGSASSSFLEV.

It belongs to the cation transport ATPase (P-type) (TC 3.A.3) family. Type IIA subfamily. In terms of assembly, monomer. Homodimer. Expressed in hippocampal neurons in the CA3 region of the Amon's horn (at protein level). Expressed in brain, heart, lung, stomach, liver, colon and mammary gland.

It is found in the golgi apparatus. It localises to the trans-Golgi network membrane. The protein resides in the golgi stack membrane. The enzyme catalyses Ca(2+)(in) + ATP + H2O = Ca(2+)(out) + ADP + phosphate + H(+). It catalyses the reaction Mn(2+)(in) + ATP + H2O = Mn(2+)(out) + ADP + phosphate + H(+). ATP-driven pump that supplies the Golgi apparatus with Ca(2+) and Mn(2+) ions, both essential cofactors for processing and trafficking of newly synthesized proteins in the secretory pathway. Within a catalytic cycle, acquires Ca(2+) or Mn(2+) ions on the cytoplasmic side of the membrane and delivers them to the lumenal side. The transfer of ions across the membrane is coupled to ATP hydrolysis and is associated with a transient phosphorylation that shifts the pump conformation from inward-facing to outward-facing state. Plays a primary role in the maintenance of Ca(2+) homeostasis in the trans-Golgi compartment with a functional impact on Golgi and post-Golgi protein sorting as well as a structural impact on cisternae morphology. Responsible for loading the Golgi stores with Ca(2+) ions in keratinocytes, contributing to keratinocyte differentiation and epidermis integrity. Participates in Ca(2+) and Mn(2+) ions uptake into the Golgi store of hippocampal neurons and regulates protein trafficking required for neural polarity. May also play a role in the maintenance of Ca(2+) and Mn(2+) homeostasis and signaling in the cytosol while preventing cytotoxicity. This chain is Calcium-transporting ATPase type 2C member 1, found in Mus musculus (Mouse).